The chain runs to 406 residues: Arginine deiminase (406 aa).

C396 serves as the catalytic Amidino-cysteine intermediate.

Belongs to the arginine deiminase family.

The protein resides in the cytoplasm. The catalysed reaction is L-arginine + H2O = L-citrulline + NH4(+). It functions in the pathway amino-acid degradation; L-arginine degradation via ADI pathway; carbamoyl phosphate from L-arginine: step 1/2. The protein is Arginine deiminase of Vibrio vulnificus (strain CMCP6).